Here is a 289-residue protein sequence, read N- to C-terminus: Protease HtpX homolog (289 aa).

Helical transmembrane passes span 9-29 (TGVLMAFLTALLVGIGYLIGG) and 31-51 (GGMIIAFTIALFMNLISYWFS). Histidine 133 is a binding site for Zn(2+). Glutamate 134 is an active-site residue. Histidine 137 contacts Zn(2+). The next 2 membrane-spanning stretches (helical) occupy residues 143–163 (TLIQTLAAVLAGAIMILVDFA) and 182–202 (IGLILAIVLAPLAATLIQLAI). Glutamate 207 is a Zn(2+) binding site.

This sequence belongs to the peptidase M48B family. It depends on Zn(2+) as a cofactor.

Its subcellular location is the cell membrane. This chain is Protease HtpX homolog, found in Pyrococcus abyssi (strain GE5 / Orsay).